A 226-amino-acid chain; its full sequence is LIM domain-containing protein PLIM2a (226 aa).

LIM zinc-binding domains are found at residues 8–68 (DKCK…LFKE) and 104–164 (DKCA…LFLE). The interval 173–226 (QAAANHRRSASSGGASPPSDDHKPDDTASIPEAKEDDAAPEAAGEEEPEPVVES) is disordered. Basic and acidic residues predominate over residues 191-209 (SDDHKPDDTASIPEAKEDD). Positions 210–226 (AAPEAAGEEEPEPVVES) are enriched in acidic residues.

Interacts with F-actin. In terms of tissue distribution, predominantly expressed in flowers, in the tapetum and in pollen grains. Detected in leaves and stems.

The protein localises to the cytoplasm. It is found in the cytoskeleton. In terms of biological role, binds to actin filaments and promotes cross-linking into thick bundles. Has an actin-stabilizing activity. The actin regulatory activities are inhibited by pH &gt; 6.8 but are [Ca(2+)] independent. In Arabidopsis thaliana (Mouse-ear cress), this protein is LIM domain-containing protein PLIM2a.